The chain runs to 142 residues: Large ribosomal subunit protein uL22c (142 aa).

This sequence belongs to the universal ribosomal protein uL22 family. In terms of assembly, part of the 50S ribosomal subunit.

It is found in the plastid. Its subcellular location is the chloroplast. Its function is as follows. This protein binds specifically to 23S rRNA. In terms of biological role, the globular domain of the protein is located near the polypeptide exit tunnel on the outside of the subunit, while an extended beta-hairpin is found that lines the wall of the exit tunnel in the center of the 70S ribosome. The chain is Large ribosomal subunit protein uL22c (rpl22) from Pinus thunbergii (Japanese black pine).